The primary structure comprises 337 residues: Glyceraldehyde-3-phosphate dehydrogenase 2 (337 aa).

Residues 11 to 12, D35, R80, and T122 each bind NADP(+); that span reads RI. D-glyceraldehyde 3-phosphate-binding positions include 153-155, T184, R199, 212-213, and R235; these read SCT and TG. C154 serves as the catalytic Nucleophile. Residue N317 coordinates NADP(+).

The protein belongs to the glyceraldehyde-3-phosphate dehydrogenase family. Homotetramer.

It is found in the cytoplasm. The enzyme catalyses D-glyceraldehyde 3-phosphate + phosphate + NADP(+) = (2R)-3-phospho-glyceroyl phosphate + NADPH + H(+). It carries out the reaction D-glyceraldehyde 3-phosphate + phosphate + NAD(+) = (2R)-3-phospho-glyceroyl phosphate + NADH + H(+). Its pathway is carbohydrate biosynthesis; Calvin cycle. Gap2 has a major role in carbon fixation as a component of the Calvin cycle. Catalyzes the oxidative phosphorylation of glyceraldehyde 3-phosphate (G3P) to 1,3-bisphosphoglycerate (BPG) using the cofactor NAD. The first reaction step involves the formation of a hemiacetal intermediate between G3P and a cysteine residue, and this hemiacetal intermediate is then oxidized to a thioester, with concomitant reduction of NAD to NADH. The reduced NADH is then exchanged with the second NAD, and the thioester is attacked by a nucleophilic inorganic phosphate to produce BPG. This Trichormus variabilis (strain ATCC 29413 / PCC 7937) (Anabaena variabilis) protein is Glyceraldehyde-3-phosphate dehydrogenase 2 (gap2).